We begin with the raw amino-acid sequence, 392 residues long: Chorismate synthase (392 aa).

Residues arginine 40 and arginine 46 each contribute to the NADP(+) site. FMN contacts are provided by residues 135 to 137 (RAS), 256 to 257 (QA), glycine 300, 315 to 319 (KPIST), and arginine 341.

It belongs to the chorismate synthase family. As to quaternary structure, homotetramer. The cofactor is FMNH2.

It carries out the reaction 5-O-(1-carboxyvinyl)-3-phosphoshikimate = chorismate + phosphate. It functions in the pathway metabolic intermediate biosynthesis; chorismate biosynthesis; chorismate from D-erythrose 4-phosphate and phosphoenolpyruvate: step 7/7. Its function is as follows. Catalyzes the anti-1,4-elimination of the C-3 phosphate and the C-6 proR hydrogen from 5-enolpyruvylshikimate-3-phosphate (EPSP) to yield chorismate, which is the branch point compound that serves as the starting substrate for the three terminal pathways of aromatic amino acid biosynthesis. This reaction introduces a second double bond into the aromatic ring system. The polypeptide is Chorismate synthase (Acidothermus cellulolyticus (strain ATCC 43068 / DSM 8971 / 11B)).